Reading from the N-terminus, the 103-residue chain is Phosphoribosyl-ATP pyrophosphatase (103 aa).

Belongs to the PRA-PH family.

It localises to the cytoplasm. It catalyses the reaction 1-(5-phospho-beta-D-ribosyl)-ATP + H2O = 1-(5-phospho-beta-D-ribosyl)-5'-AMP + diphosphate + H(+). Its pathway is amino-acid biosynthesis; L-histidine biosynthesis; L-histidine from 5-phospho-alpha-D-ribose 1-diphosphate: step 2/9. This Listeria monocytogenes serotype 4a (strain HCC23) protein is Phosphoribosyl-ATP pyrophosphatase.